An 887-amino-acid chain; its full sequence is Valine--tRNA ligase (887 aa).

The short motif at 48–58 is the 'HIGH' region element; that stretch reads PNVTGVLHVGH. The short motif at 527 to 531 is the 'KMSKS' region element; the sequence is KMSKS. K530 provides a ligand contact to ATP. Residues 814–887 adopt a coiled-coil conformation; that stretch reads LAGLVDIEAE…EASDRLKKLS (74 aa).

The protein belongs to the class-I aminoacyl-tRNA synthetase family. ValS type 1 subfamily. Monomer.

The protein resides in the cytoplasm. The enzyme catalyses tRNA(Val) + L-valine + ATP = L-valyl-tRNA(Val) + AMP + diphosphate. Catalyzes the attachment of valine to tRNA(Val). As ValRS can inadvertently accommodate and process structurally similar amino acids such as threonine, to avoid such errors, it has a 'posttransfer' editing activity that hydrolyzes mischarged Thr-tRNA(Val) in a tRNA-dependent manner. The protein is Valine--tRNA ligase of Desulfotalea psychrophila (strain LSv54 / DSM 12343).